Here is a 428-residue protein sequence, read N- to C-terminus: Secernin-2 (428 aa).

Cys-10 is an active-site residue.

It belongs to the peptidase C69 family. Secernin subfamily.

In Xenopus laevis (African clawed frog), this protein is Secernin-2 (scrn2).